The following is a 131-amino-acid chain: Photosystem II extrinsic protein U (131 aa).

Positions 1–28 (MKFISRLLVACSLLIGLMGFLGADLAQA) are cleaved as a signal peptide. A propeptide spanning residues 29–36 (LTPNPILA) is cleaved from the precursor.

This sequence belongs to the PsbU family. PSII is composed of 1 copy each of membrane proteins PsbA, PsbB, PsbC, PsbD, PsbE, PsbF, PsbH, PsbI, PsbJ, PsbK, PsbL, PsbM, PsbT, PsbX, PsbY, PsbZ, Psb30/Ycf12, peripheral proteins PsbO, CyanoQ (PsbQ), PsbU, PsbV and a large number of cofactors. It forms dimeric complexes.

The protein resides in the cellular thylakoid membrane. One of the extrinsic, lumenal subunits of photosystem II (PSII). PSII is a light-driven water plastoquinone oxidoreductase, using light energy to abstract electrons from H(2)O, generating a proton gradient subsequently used for ATP formation. The extrinsic proteins stabilize the structure of photosystem II oxygen-evolving complex (OEC), the ion environment of oxygen evolution and protect the OEC against heat-induced inactivation. May modulate the Cl(-) requirement for oxygen evolution. In Synechocystis sp. (strain ATCC 27184 / PCC 6803 / Kazusa), this protein is Photosystem II extrinsic protein U.